A 622-amino-acid polypeptide reads, in one-letter code: Chaperone protein HscA homolog (622 aa).

The protein belongs to the heat shock protein 70 family.

In terms of biological role, chaperone involved in the maturation of iron-sulfur cluster-containing proteins. Has a low intrinsic ATPase activity which is markedly stimulated by HscB. This Burkholderia ambifaria (strain MC40-6) protein is Chaperone protein HscA homolog.